A 224-amino-acid chain; its full sequence is MKNSMYLPFPSKGLYAITPDRLQGDALLAAAESAILGGAAVVQYRPKSGPASDRLSDGIRLQELCRTAGIPLIVNDSPRLAAEIGADGVHLGKNDGSVAAARHVLGDRAIVGISCYDSLERALRAEAEGANYVAFGALFPSATKPCASRARLETLREAGTRLQIPIAAIGGIDTTNAGQVIGAGADLVAAVEAVFGAADVARAARELCSLFHAPRKRRPRCDDA.

Residues 43–47 and Asn75 each bind 4-amino-2-methyl-5-(diphosphooxymethyl)pyrimidine; that span reads QYRPK. 2 residues coordinate Mg(2+): Asp76 and Asp95. Residue Ser114 participates in 4-amino-2-methyl-5-(diphosphooxymethyl)pyrimidine binding. 141-143 serves as a coordination point for 2-[(2R,5Z)-2-carboxy-4-methylthiazol-5(2H)-ylidene]ethyl phosphate; it reads SAT. Residue Lys144 participates in 4-amino-2-methyl-5-(diphosphooxymethyl)pyrimidine binding. Gly171 serves as a coordination point for 2-[(2R,5Z)-2-carboxy-4-methylthiazol-5(2H)-ylidene]ethyl phosphate.

The protein belongs to the thiamine-phosphate synthase family. Mg(2+) serves as cofactor.

The catalysed reaction is 2-[(2R,5Z)-2-carboxy-4-methylthiazol-5(2H)-ylidene]ethyl phosphate + 4-amino-2-methyl-5-(diphosphooxymethyl)pyrimidine + 2 H(+) = thiamine phosphate + CO2 + diphosphate. It catalyses the reaction 2-(2-carboxy-4-methylthiazol-5-yl)ethyl phosphate + 4-amino-2-methyl-5-(diphosphooxymethyl)pyrimidine + 2 H(+) = thiamine phosphate + CO2 + diphosphate. The enzyme catalyses 4-methyl-5-(2-phosphooxyethyl)-thiazole + 4-amino-2-methyl-5-(diphosphooxymethyl)pyrimidine + H(+) = thiamine phosphate + diphosphate. Its pathway is cofactor biosynthesis; thiamine diphosphate biosynthesis; thiamine phosphate from 4-amino-2-methyl-5-diphosphomethylpyrimidine and 4-methyl-5-(2-phosphoethyl)-thiazole: step 1/1. In terms of biological role, condenses 4-methyl-5-(beta-hydroxyethyl)thiazole monophosphate (THZ-P) and 2-methyl-4-amino-5-hydroxymethyl pyrimidine pyrophosphate (HMP-PP) to form thiamine monophosphate (TMP). In Methylococcus capsulatus (strain ATCC 33009 / NCIMB 11132 / Bath), this protein is Thiamine-phosphate synthase.